The following is a 2655-amino-acid chain: Probable polyketide synthase 42 (2655 aa).

The region spanning 16–445 (QNGVAVIGVG…GSNCCIILSE (430 aa)) is the Ketosynthase family 3 (KS3) domain. Residues cysteine 186, histidine 325, and histidine 368 each act as for beta-ketoacyl synthase activity in the active site. The acyl/malonyl transferase stretch occupies residues 634-667 (GIKSDIMVGHSFGEIACSYCSGMVDFKTLCYLTY). The active-site For acyl/malonyl transferase activity is serine 644. Residues 926–1059 (HPTWKKANKN…ANYSLFKHND (134 aa)) are N-terminal hotdog fold. The PKS/mFAS DH domain occupies 926 to 1234 (HPTWKKANKN…CKSSIPIIDS (309 aa)). Histidine 970 serves as the catalytic Proton acceptor; for dehydratase activity. Residues 1074 to 1234 (NYTIISKDEL…CKSSIPIIDS (161 aa)) form a C-terminal hotdog fold region. The active-site Proton donor; for dehydratase activity is aspartate 1146. Residues 1700-1719 (YNNNNNNNNNNNNNNNNNNN) form a disordered region. In terms of domain architecture, Carrier spans 2517–2594 (NENNNIGDLL…TTIEIIIKGY (78 aa)). Serine 2554 is subject to O-(pantetheine 4'-phosphoryl)serine. The disordered stretch occupies residues 2612-2655 (SVVQKETIKDNNENKDDIKIDMDDKKENLKGKKENIDDKKENNN). Basic and acidic residues predominate over residues 2617–2655 (ETIKDNNENKDDIKIDMDDKKENLKGKKENIDDKKENNN). Residues 2618-2655 (TIKDNNENKDDIKIDMDDKKENLKGKKENIDDKKENNN) adopt a coiled-coil conformation.

Pantetheine 4'-phosphate serves as cofactor.

Functionally, probable polyketide synthase. The chain is Probable polyketide synthase 42 (pks42) from Dictyostelium discoideum (Social amoeba).